A 218-amino-acid polypeptide reads, in one-letter code: Protein GrpE (218 aa).

The segment covering 1 to 21 has biased composition (basic and acidic residues); it reads MSDKQREAERQQSEDKAHSEA. The interval 1–66 is disordered; that stretch reads MSDKQREAER…LEEARARAEE (66 aa). Low complexity predominate over residues 24–36; the sequence is AEAGQAPEAQAAE.

The protein belongs to the GrpE family. As to quaternary structure, homodimer.

The protein localises to the cytoplasm. Functionally, participates actively in the response to hyperosmotic and heat shock by preventing the aggregation of stress-denatured proteins, in association with DnaK and GrpE. It is the nucleotide exchange factor for DnaK and may function as a thermosensor. Unfolded proteins bind initially to DnaJ; upon interaction with the DnaJ-bound protein, DnaK hydrolyzes its bound ATP, resulting in the formation of a stable complex. GrpE releases ADP from DnaK; ATP binding to DnaK triggers the release of the substrate protein, thus completing the reaction cycle. Several rounds of ATP-dependent interactions between DnaJ, DnaK and GrpE are required for fully efficient folding. The polypeptide is Protein GrpE (Alkalilimnicola ehrlichii (strain ATCC BAA-1101 / DSM 17681 / MLHE-1)).